Reading from the N-terminus, the 481-residue chain is MAKEVDYTIKPEATASNINTEDWPLLLKNYDKLMVRTGHFTPIPAGSSPLKRDLKSYINSGVINLDKPSNPSSHEVVAWMKRILRAEKTGHSGTLDPKVTGCLIVCIDRATRLVKSQQGAGKEYVCVIRLHDKIPGGEAQFKRALETLTGALFQRPPLISAVKRQLRIRTIHESKLYEFDNERHLGVFWVSCEAGTYIRTLCVHLGLLLGVGAHMQELRRVRSGAMSENEGMVTLHDVLDAQWLYDNQRDESYLRKVIKPLESLLTTYKRIVVKDSAVNAVCYGAKLMIPGLLRFEAGIELGEEVVLMTTKGEAIAIGIAQMSTVELSTCDHGVVAKVKRCIMERDLYPRRWGLGPVALEKKKLKSSGKLDKYGRANEATPAKWKSEYKDYSAPDGDSSQQAVDVVAKEEASPKEEPSLEANESKMDIDDAQDDEDKKKRKRHEGETPEERAERKRKKKEKKEKKERRKSKQEKDDSDDSD.

The active-site Nucleophile is D96. In terms of domain architecture, PUA spans 268 to 343 (YKRIVVKDSA…VVAKVKRCIM (76 aa)). The interval 387-481 (EYKDYSAPDG…QEKDDSDDSD (95 aa)) is disordered. Composition is skewed to basic and acidic residues over residues 406-428 (VAKEEASPKEEPSLEANESKMDI) and 443-453 (HEGETPEERAE). The span at 454–471 (RKRKKKEKKEKKERRKSK) shows a compositional bias: basic residues.

It belongs to the pseudouridine synthase TruB family. Component of the small nucleolar ribonucleoprotein particles containing H/ACA-type snoRNAs (H/ACA snoRNPs).

Its subcellular location is the nucleus. It localises to the nucleolus. The catalysed reaction is uridine in 5S rRNA = pseudouridine in 5S rRNA. It carries out the reaction uridine in snRNA = pseudouridine in snRNA. The enzyme catalyses a uridine in mRNA = a pseudouridine in mRNA. Functionally, catalytic subunit of H/ACA small nucleolar ribonucleoprotein (H/ACA snoRNP) complex, which catalyzes pseudouridylation of rRNA. This involves the isomerization of uridine such that the ribose is subsequently attached to C5, instead of the normal N1. Pseudouridine ('psi') residues may serve to stabilize the conformation of rRNAs and play a central role in ribosomal RNA processing. The H/ACA snoRNP complex also mediates pseudouridylation of other types of RNAs. Catalyzes pseudouridylation at position 93 in U2 snRNA. Also catalyzes pseudouridylation of mRNAs; H/ACA-type snoRNAs probably guide pseudouridylation of mRNAs. This Emericella nidulans (strain FGSC A4 / ATCC 38163 / CBS 112.46 / NRRL 194 / M139) (Aspergillus nidulans) protein is H/ACA ribonucleoprotein complex subunit CBF5 (cbf5).